We begin with the raw amino-acid sequence, 118 residues long: MTDKVLKRKQLLKVKRKLRTRGKIFGRADKPRVSVFKSNKYFYAQAINDELGVTLASVDGKKLGLGNNKENAKQIANEFATSLKKAKITEVVFDRNGYLYHGVVAAFADTLRENGIKL.

The protein belongs to the universal ribosomal protein uL18 family. Part of the 50S ribosomal subunit; part of the 5S rRNA/L5/L18/L25 subcomplex. Contacts the 5S and 23S rRNAs.

In terms of biological role, this is one of the proteins that bind and probably mediate the attachment of the 5S RNA into the large ribosomal subunit, where it forms part of the central protuberance. The polypeptide is Large ribosomal subunit protein uL18 (Helicobacter hepaticus (strain ATCC 51449 / 3B1)).